The chain runs to 632 residues: Arginine--tRNA ligase (632 aa).

Residues 120-130 (ANPIHPLHIGH) carry the 'HIGH' region motif.

Belongs to the class-I aminoacyl-tRNA synthetase family.

The protein localises to the cytoplasm. The catalysed reaction is tRNA(Arg) + L-arginine + ATP = L-arginyl-tRNA(Arg) + AMP + diphosphate. The polypeptide is Arginine--tRNA ligase (Pyrobaculum islandicum (strain DSM 4184 / JCM 9189 / GEO3)).